A 287-amino-acid polypeptide reads, in one-letter code: tRNA selenocysteine 1-associated protein 1 (287 aa).

2 RRM domains span residues 3–86 and 96–175; these read ASLW…YVTY and YSLF…VAIP.

The protein belongs to the RRM TRSPAP family. In terms of assembly, component of the tRNA(Sec) complex composed at least of EEFSEC, SECISBP2, SEPHS1, SEPSECS, TRNAU1AP and tRNA(Sec). Found in a complex with tRNA(Sec). Interacts with SEPSECS. Associates with mRNP and/or polysomes. Found in a complex with EEFSEC, SECISBP2, TRNAU1AP and tRNA(Sec).

The protein resides in the nucleus. It localises to the cytoplasm. In terms of biological role, involved in the early steps of selenocysteine biosynthesis and tRNA(Sec) charging to the later steps resulting in the cotranslational incorporation of selenocysteine into selenoproteins. Stabilizes the SECISBP2, EEFSEC and tRNA(Sec) complex. May be involved in the methylation of tRNA(Sec). Enhances efficiency of selenoproteins synthesis. This Pongo abelii (Sumatran orangutan) protein is tRNA selenocysteine 1-associated protein 1 (TRNAU1AP).